The sequence spans 72 residues: Translation initiation factor IF-1 (72 aa).

One can recognise an S1-like domain in the interval 1 to 72 (MAKDDVIEVE…TRGRITYRYK (72 aa)). A Phosphotyrosine modification is found at Y60.

Belongs to the IF-1 family. In terms of assembly, component of the 30S ribosomal translation pre-initiation complex which assembles on the 30S ribosome in the order IF-2 and IF-3, IF-1 and N-formylmethionyl-tRNA(fMet); mRNA recruitment can occur at any time during PIC assembly.

The protein resides in the cytoplasm. One of the essential components for the initiation of protein synthesis. Stabilizes the binding of IF-2 and IF-3 on the 30S subunit to which N-formylmethionyl-tRNA(fMet) subsequently binds. Helps modulate mRNA selection, yielding the 30S pre-initiation complex (PIC). Upon addition of the 50S ribosomal subunit IF-1, IF-2 and IF-3 are released leaving the mature 70S translation initiation complex. This chain is Translation initiation factor IF-1, found in Geobacillus kaustophilus (strain HTA426).